Consider the following 380-residue polypeptide: MLPTFKRYMSSSAHQIPKHFKSLIYSTHEVEDCTKVLSVKNYTPKQDLSQSIVLKTLAFPINPSDINQLQGVYPSRPEKTYDYSTDEPAAIAGNEGVFEVVSLPSGSSKGDLKLGDRVIPLQANQGTWSNYRVFSSSSDLIKVNDLDLFSAATVSVNGCTGFQLVSDYIDWNSNGNEWIIQNAGTSSVSKIVTQVAKAKGIKTLSVIRDRDNFDEVAKVLEDKYGATKVISESQNNDKTFAKEVLSKILGENARVRLALNSVGGKSSASIARKLENNALMLTYGGMSKQPVTLPTSLHIFKGLTSKGYWVTEKNKKNPQSKIDTISDFIKMYNYGHIISPRDEIETLTWNTNTTTDEQLLELVKKGITGKGKKKMVVLEW.

Residues 1–9 constitute a mitochondrion transit peptide; the sequence is MLPTFKRYM. The active-site Proton donor is the Tyr-73. NADP(+) is bound by residues Asn-157, 185-188, 208-210, 283-286, and 308-310; these read TSSV, RDR, YGGM, and YWV. Ser-339 is modified (phosphoserine). Position 373 (Lys-373) interacts with NADP(+).

Belongs to the zinc-containing alcohol dehydrogenase family. Quinone oxidoreductase subfamily. As to quaternary structure, homodimer or in a complex with other proteins. Interacts with ARS1.

Its subcellular location is the mitochondrion matrix. It carries out the reaction a 2,3-saturated acyl-[ACP] + NADP(+) = a (2E)-enoyl-[ACP] + NADPH + H(+). The catalysed reaction is (2E,4E)-hexadienoyl-CoA + NADPH + H(+) = (4E)-hexenoyl-CoA + NADP(+). The enzyme catalyses (2E)-hexenoyl-CoA + NADPH + H(+) = hexanoyl-CoA + NADP(+). Its function is as follows. Catalyzes the NADPH-dependent reduction of trans-2-enoyl thioesters in mitochondrial fatty acid synthesis (fatty acid synthesis type II). Fatty acid chain elongation in mitochondria uses acyl carrier protein (ACP) as an acyl group carrier, but the enzyme accepts both ACP and CoA thioesters as substrates in vitro. Required for respiration and the maintenance of the mitochondrial compartment. This chain is Enoyl-[acyl-carrier-protein] reductase, mitochondrial (ETR1), found in Saccharomyces cerevisiae (strain ATCC 204508 / S288c) (Baker's yeast).